Consider the following 202-residue polypeptide: Holliday junction resolvase RecU (202 aa).

Positions 85, 87, 100, and 119 each coordinate Mg(2+).

It belongs to the RecU family. Mg(2+) is required as a cofactor.

The protein localises to the cytoplasm. It catalyses the reaction Endonucleolytic cleavage at a junction such as a reciprocal single-stranded crossover between two homologous DNA duplexes (Holliday junction).. In terms of biological role, endonuclease that resolves Holliday junction intermediates in genetic recombination. Cleaves mobile four-strand junctions by introducing symmetrical nicks in paired strands. Promotes annealing of linear ssDNA with homologous dsDNA. Required for DNA repair, homologous recombination and chromosome segregation. The sequence is that of Holliday junction resolvase RecU from Streptococcus equi subsp. equi (strain 4047).